Reading from the N-terminus, the 62-residue chain is Large ribosomal subunit protein eL24 (62 aa).

Zn(2+)-binding residues include Cys-6, Cys-9, Cys-32, and Cys-36. A C4-type zinc finger spans residues 6–36 (CSFCEGKIEPGCGKKYVKKDGSVMQFCSSKC).

Belongs to the eukaryotic ribosomal protein eL24 family. Part of the 50S ribosomal subunit. Forms a cluster with proteins L3 and L14. The cofactor is Zn(2+).

Functionally, binds to the 23S rRNA. This Methanococcus vannielii (strain ATCC 35089 / DSM 1224 / JCM 13029 / OCM 148 / SB) protein is Large ribosomal subunit protein eL24.